Consider the following 57-residue polypeptide: uncharacterized protein (57 aa).

The interval 34-57 (QGKRGETEGQIEISRKAGHPAPAF) is disordered.

This is an uncharacterized protein from Saccharomyces cerevisiae (strain ATCC 204508 / S288c) (Baker's yeast).